The primary structure comprises 370 residues: Homoserine O-acetyltransferase (370 aa).

Positions 44 to 350 (NAILVAHAWT…AYGHDAFLLE (307 aa)) constitute an AB hydrolase-1 domain. The active-site Nucleophile is S150. R217 contributes to the substrate binding site. Residues D311 and H344 contribute to the active site. Residue D345 participates in substrate binding.

The protein belongs to the AB hydrolase superfamily. MetX family. In terms of assembly, homodimer.

The protein localises to the cytoplasm. The catalysed reaction is L-homoserine + acetyl-CoA = O-acetyl-L-homoserine + CoA. It functions in the pathway amino-acid biosynthesis; L-methionine biosynthesis via de novo pathway; O-acetyl-L-homoserine from L-homoserine: step 1/1. Functionally, transfers an acetyl group from acetyl-CoA to L-homoserine, forming acetyl-L-homoserine. The protein is Homoserine O-acetyltransferase of Geotalea uraniireducens (strain Rf4) (Geobacter uraniireducens).